Consider the following 74-residue polypeptide: Putative membrane protein insertion efficiency factor (74 aa).

Belongs to the UPF0161 family.

The protein resides in the cell inner membrane. Its function is as follows. Could be involved in insertion of integral membrane proteins into the membrane. The chain is Putative membrane protein insertion efficiency factor from Anaeromyxobacter sp. (strain Fw109-5).